We begin with the raw amino-acid sequence, 70 residues long: uncharacterized protein (70 aa).

The chain crosses the membrane as a helical span at residues Cys-14 to Ile-34.

The protein resides in the virion membrane. This is an uncharacterized protein from Homo sapiens (Human).